The following is a 998-amino-acid chain: Probable protein kinase DDB_G0277539 (998 aa).

Disordered regions lie at residues 1–34 (MDFP…DFDQ), 65–207 (CEDQ…TNEF), 265–284 (INNN…FSSS), 316–367 (SNGS…NYSS), 380–420 (ERTN…PNSI), and 435–489 (RLQS…NNNN). Positions 23 to 32 (YDDDDDDDDF) are enriched in acidic residues. A compositionally biased stretch (low complexity) spans 70 to 139 (QQQQQQSSSP…NNNNNNNNNN (70 aa)). Residues 140–150 (SHHHHLRKGRR) show a composition bias toward basic residues. Polar residues predominate over residues 166–177 (ASLSSTKTNMFP). Composition is skewed to low complexity over residues 184–203 (SSPS…QSQQ) and 265–274 (INNNYNNNNN). Positions 316–328 (SNGSYNKGNTFPS) are enriched in polar residues. A compositionally biased stretch (basic and acidic residues) spans 330 to 340 (EVKRVRPDQRA). Composition is skewed to low complexity over residues 393–415 (NVNN…NNNN) and 450–489 (NNNN…NNNN). Residues 508–849 (FQELDLIGEG…AEQLLEHPLI (342 aa)) enclose the Protein kinase domain. ATP contacts are provided by residues 514-522 (IGEGSFGHV) and Lys537. Catalysis depends on Asp631, which acts as the Proton acceptor. Mg(2+)-binding residues include Asn636 and Glu677.

This sequence belongs to the protein kinase superfamily. Ser/Thr protein kinase family. WEE1 subfamily.

The catalysed reaction is L-seryl-[protein] + ATP = O-phospho-L-seryl-[protein] + ADP + H(+). It catalyses the reaction L-threonyl-[protein] + ATP = O-phospho-L-threonyl-[protein] + ADP + H(+). This chain is Probable protein kinase DDB_G0277539, found in Dictyostelium discoideum (Social amoeba).